The chain runs to 358 residues: MQSYNIAVLAGDGIGPEVMAEAIKVLNRVQEKFGFKLNFNEFFVGGAAIEHCGYPLPAETLKGCDQADAILFGSVGGPKWTNLPPDQQPERGALLPLRKHFKLFCNLRPATLYKGLEKFCPLRADIAAKGFDMVVVRELTGGIYFGQPKGREGDGVQTKAFDTEVYYKYEIERIARAAFEAAMKRNKKVTSVDKANVLQSSILWRETVTEMAKDYPEVTLEHIYIDNATMQLIKSPESFDVLLCSNIFGDIISDEAAMITGSMGMLPSASLNEEGFGLYEPAGGSAPDIAGKGIANPIAQILSAAMMLRYSFNLNEAADAIESAVQKVLASGHRTADLADDSTPVSTAEMGTLITQAI.

77–90 (GPKWTNLPPDQQPE) contacts NAD(+). Substrate contacts are provided by arginine 98, arginine 108, arginine 137, and aspartate 226. Mg(2+)-binding residues include aspartate 226, aspartate 250, and aspartate 254. NAD(+) is bound at residue 284 to 296 (GSAPDIAGKGIAN).

This sequence belongs to the isocitrate and isopropylmalate dehydrogenases family. LeuB type 1 subfamily. In terms of assembly, homodimer. It depends on Mg(2+) as a cofactor. The cofactor is Mn(2+).

It localises to the cytoplasm. It carries out the reaction (2R,3S)-3-isopropylmalate + NAD(+) = 4-methyl-2-oxopentanoate + CO2 + NADH. It participates in amino-acid biosynthesis; L-leucine biosynthesis; L-leucine from 3-methyl-2-oxobutanoate: step 3/4. In terms of biological role, catalyzes the oxidation of 3-carboxy-2-hydroxy-4-methylpentanoate (3-isopropylmalate) to 3-carboxy-4-methyl-2-oxopentanoate. The product decarboxylates to 4-methyl-2 oxopentanoate. The sequence is that of 3-isopropylmalate dehydrogenase (leuB) from Haemophilus influenzae (strain ATCC 51907 / DSM 11121 / KW20 / Rd).